The primary structure comprises 113 residues: Protein CTLA-2-beta (113 aa).

2 repeat units span residues 15-17 (EWK) and 18-20 (EWK). The 2 X 3 AA tandem repeats of E-W-K stretch occupies residues 15–20 (EWKEWK).

The protein to the propeptide regions of cysteine proteases.

Its function is as follows. Not known, expressed in activated T-cell. The protein is Protein CTLA-2-beta (Ctla2b) of Mus musculus (Mouse).